Reading from the N-terminus, the 466-residue chain is Light-independent protochlorophyllide reductase subunit N (466 aa).

The [4Fe-4S] cluster site is built by C24, C49, and C109.

It belongs to the BchN/ChlN family. In terms of assembly, protochlorophyllide reductase is composed of three subunits; ChlL, ChlN and ChlB. Forms a heterotetramer of two ChlB and two ChlN subunits. The cofactor is [4Fe-4S] cluster.

The catalysed reaction is chlorophyllide a + oxidized 2[4Fe-4S]-[ferredoxin] + 2 ADP + 2 phosphate = protochlorophyllide a + reduced 2[4Fe-4S]-[ferredoxin] + 2 ATP + 2 H2O. Its pathway is porphyrin-containing compound metabolism; chlorophyll biosynthesis (light-independent). Its function is as follows. Component of the dark-operative protochlorophyllide reductase (DPOR) that uses Mg-ATP and reduced ferredoxin to reduce ring D of protochlorophyllide (Pchlide) to form chlorophyllide a (Chlide). This reaction is light-independent. The NB-protein (ChlN-ChlB) is the catalytic component of the complex. The polypeptide is Light-independent protochlorophyllide reductase subunit N (Synechococcus sp. (strain JA-3-3Ab) (Cyanobacteria bacterium Yellowstone A-Prime)).